The primary structure comprises 394 residues: Ornithine aminotransferase 1 (394 aa).

The residue at position 252 (K252) is an N6-(pyridoxal phosphate)lysine.

This sequence belongs to the class-III pyridoxal-phosphate-dependent aminotransferase family. OAT subfamily. The cofactor is pyridoxal 5'-phosphate.

The protein resides in the cytoplasm. The catalysed reaction is a 2-oxocarboxylate + L-ornithine = L-glutamate 5-semialdehyde + an L-alpha-amino acid. It functions in the pathway amino-acid biosynthesis; L-proline biosynthesis; L-glutamate 5-semialdehyde from L-ornithine: step 1/1. Catalyzes the interconversion of ornithine to glutamate semialdehyde. The polypeptide is Ornithine aminotransferase 1 (Staphylococcus saprophyticus subsp. saprophyticus (strain ATCC 15305 / DSM 20229 / NCIMB 8711 / NCTC 7292 / S-41)).